The following is a 405-amino-acid chain: Argininosuccinate synthase (405 aa).

Residue 11–19 (AYSGGLDTS) participates in ATP binding. Tyrosine 90 provides a ligand contact to L-citrulline. Residue glycine 119 coordinates ATP. The L-aspartate site is built by threonine 121, asparagine 125, and aspartate 126. Asparagine 125 contacts L-citrulline. L-citrulline is bound by residues arginine 129, serine 178, serine 187, glutamate 263, and tyrosine 275.

Belongs to the argininosuccinate synthase family. Type 1 subfamily. As to quaternary structure, homotetramer.

The protein localises to the cytoplasm. The enzyme catalyses L-citrulline + L-aspartate + ATP = 2-(N(omega)-L-arginino)succinate + AMP + diphosphate + H(+). The protein operates within amino-acid biosynthesis; L-arginine biosynthesis; L-arginine from L-ornithine and carbamoyl phosphate: step 2/3. The chain is Argininosuccinate synthase from Legionella pneumophila (strain Corby).